Consider the following 274-residue polypeptide: 2,3,4,5-tetrahydropyridine-2,6-dicarboxylate N-succinyltransferase (274 aa).

Substrate is bound by residues Arg104 and Asp141.

It belongs to the transferase hexapeptide repeat family. In terms of assembly, homotrimer.

It localises to the cytoplasm. It carries out the reaction (S)-2,3,4,5-tetrahydrodipicolinate + succinyl-CoA + H2O = (S)-2-succinylamino-6-oxoheptanedioate + CoA. The protein operates within amino-acid biosynthesis; L-lysine biosynthesis via DAP pathway; LL-2,6-diaminopimelate from (S)-tetrahydrodipicolinate (succinylase route): step 1/3. The sequence is that of 2,3,4,5-tetrahydropyridine-2,6-dicarboxylate N-succinyltransferase from Shewanella denitrificans (strain OS217 / ATCC BAA-1090 / DSM 15013).